The sequence spans 101 residues: UPF0213 protein VC_A0739 (101 aa).

Residues S9 to A85 enclose the GIY-YIG domain.

It belongs to the UPF0213 family.

The protein is UPF0213 protein VC_A0739 of Vibrio cholerae serotype O1 (strain ATCC 39315 / El Tor Inaba N16961).